A 379-amino-acid chain; its full sequence is S-adenosylmethionine synthase (379 aa).

Histidine 15 is an ATP binding site. Aspartate 17 is a binding site for Mg(2+). A K(+)-binding site is contributed by glutamate 43. Positions 56 and 99 each coordinate L-methionine. The tract at residues 99–109 (QSPDITQGVDR) is flexible loop. Residues 164–166 (DAK), 230–231 (RF), aspartate 239, 245–246 (RK), alanine 262, and lysine 266 each bind ATP. Aspartate 239 is an L-methionine binding site. Residue lysine 270 coordinates L-methionine.

Belongs to the AdoMet synthase family. As to quaternary structure, homotetramer; dimer of dimers. The cofactor is Mg(2+). It depends on K(+) as a cofactor.

It is found in the cytoplasm. It carries out the reaction L-methionine + ATP + H2O = S-adenosyl-L-methionine + phosphate + diphosphate. It participates in amino-acid biosynthesis; S-adenosyl-L-methionine biosynthesis; S-adenosyl-L-methionine from L-methionine: step 1/1. In terms of biological role, catalyzes the formation of S-adenosylmethionine (AdoMet) from methionine and ATP. The overall synthetic reaction is composed of two sequential steps, AdoMet formation and the subsequent tripolyphosphate hydrolysis which occurs prior to release of AdoMet from the enzyme. This chain is S-adenosylmethionine synthase, found in Buchnera aphidicola subsp. Schizaphis graminum (strain Sg).